The following is a 290-amino-acid chain: Ribosomal RNA small subunit methyltransferase A (290 aa).

S-adenosyl-L-methionine-binding residues include Asn27, Leu29, Gly54, Glu75, Asp100, and Asn125.

This sequence belongs to the class I-like SAM-binding methyltransferase superfamily. rRNA adenine N(6)-methyltransferase family. RsmA subfamily.

The protein resides in the cytoplasm. It catalyses the reaction adenosine(1518)/adenosine(1519) in 16S rRNA + 4 S-adenosyl-L-methionine = N(6)-dimethyladenosine(1518)/N(6)-dimethyladenosine(1519) in 16S rRNA + 4 S-adenosyl-L-homocysteine + 4 H(+). Specifically dimethylates two adjacent adenosines (A1518 and A1519) in the loop of a conserved hairpin near the 3'-end of 16S rRNA in the 30S particle. May play a critical role in biogenesis of 30S subunits. The sequence is that of Ribosomal RNA small subunit methyltransferase A from Streptococcus gordonii (strain Challis / ATCC 35105 / BCRC 15272 / CH1 / DL1 / V288).